We begin with the raw amino-acid sequence, 128 residues long: Ribonuclease P protein component (128 aa).

It belongs to the RnpA family. In terms of assembly, consists of a catalytic RNA component (M1 or rnpB) and a protein subunit.

The catalysed reaction is Endonucleolytic cleavage of RNA, removing 5'-extranucleotides from tRNA precursor.. Its function is as follows. RNaseP catalyzes the removal of the 5'-leader sequence from pre-tRNA to produce the mature 5'-terminus. It can also cleave other RNA substrates such as 4.5S RNA. The protein component plays an auxiliary but essential role in vivo by binding to the 5'-leader sequence and broadening the substrate specificity of the ribozyme. In Rhizobium meliloti (strain 1021) (Ensifer meliloti), this protein is Ribonuclease P protein component.